The chain runs to 368 residues: Flagellar P-ring protein 1 (368 aa).

A signal peptide spans 1 to 24 (MIFKQIRRLIAAALLAALSLPAAA).

Belongs to the FlgI family. As to quaternary structure, the basal body constitutes a major portion of the flagellar organelle and consists of four rings (L,P,S, and M) mounted on a central rod.

The protein resides in the periplasm. It localises to the bacterial flagellum basal body. In terms of biological role, assembles around the rod to form the L-ring and probably protects the motor/basal body from shearing forces during rotation. This is Flagellar P-ring protein 1 from Chromobacterium violaceum (strain ATCC 12472 / DSM 30191 / JCM 1249 / CCUG 213 / NBRC 12614 / NCIMB 9131 / NCTC 9757 / MK).